The chain runs to 286 residues: S-methyl-5'-thioadenosine phosphorylase (286 aa).

Phosphate-binding positions include serine 11, 53–54 (RH), and 86–87 (SA). Position 185 (methionine 185) interacts with substrate. Threonine 186 serves as a coordination point for phosphate. Residue 209 to 211 (DYD) participates in substrate binding.

The protein belongs to the PNP/MTAP phosphorylase family. MTAP subfamily. In terms of assembly, homohexamer. Dimer of a homotrimer.

The enzyme catalyses S-methyl-5'-thioadenosine + phosphate = 5-(methylsulfanyl)-alpha-D-ribose 1-phosphate + adenine. The protein operates within amino-acid biosynthesis; L-methionine biosynthesis via salvage pathway; S-methyl-5-thio-alpha-D-ribose 1-phosphate from S-methyl-5'-thioadenosine (phosphorylase route): step 1/1. Functionally, catalyzes the reversible phosphorylation of S-methyl-5'-thioadenosine (MTA) to adenine and 5-methylthioribose-1-phosphate. Involved in the breakdown of MTA, a major by-product of polyamine biosynthesis. Responsible for the first step in the methionine salvage pathway after MTA has been generated from S-adenosylmethionine. Has broad substrate specificity with 6-aminopurine nucleosides as preferred substrates. This chain is S-methyl-5'-thioadenosine phosphorylase, found in Geobacter sulfurreducens (strain ATCC 51573 / DSM 12127 / PCA).